A 351-amino-acid chain; its full sequence is D-alanine--D-alanine ligase (351 aa).

The 195-residue stretch at 146–340 (KEIMLYNNIK…YEDLCESIVL (195 aa)) folds into the ATP-grasp domain. ATP is bound at residue 173–226 (AFDYPMVVKPNSGGSSIGTRIVHDEAELAESLKDAYRFDDEIIVEEFITGREFS). Residues aspartate 295, glutamate 307, and asparagine 309 each coordinate Mg(2+).

This sequence belongs to the D-alanine--D-alanine ligase family. Mg(2+) serves as cofactor. Requires Mn(2+) as cofactor.

It is found in the cytoplasm. The catalysed reaction is 2 D-alanine + ATP = D-alanyl-D-alanine + ADP + phosphate + H(+). It functions in the pathway cell wall biogenesis; peptidoglycan biosynthesis. Functionally, cell wall formation. The protein is D-alanine--D-alanine ligase of Pediococcus pentosaceus (strain ATCC 25745 / CCUG 21536 / LMG 10740 / 183-1w).